The sequence spans 433 residues: NADH-quinone oxidoreductase subunit D (433 aa).

This sequence belongs to the complex I 49 kDa subunit family. In terms of assembly, NDH-1 is composed of 14 different subunits. Subunits NuoB, C, D, E, F, and G constitute the peripheral sector of the complex.

It is found in the cell membrane. The enzyme catalyses a quinone + NADH + 5 H(+)(in) = a quinol + NAD(+) + 4 H(+)(out). NDH-1 shuttles electrons from NADH, via FMN and iron-sulfur (Fe-S) centers, to quinones in the respiratory chain. The immediate electron acceptor for the enzyme in this species is believed to be a menaquinone. Couples the redox reaction to proton translocation (for every two electrons transferred, four hydrogen ions are translocated across the cytoplasmic membrane), and thus conserves the redox energy in a proton gradient. This is NADH-quinone oxidoreductase subunit D from Cutibacterium acnes (strain DSM 16379 / KPA171202) (Propionibacterium acnes).